Here is a 293-residue protein sequence, read N- to C-terminus: Nucleotide-binding protein Csac_1160 (293 aa).

11–18 contacts ATP; it reads GMSGAGKS. Residue 62-65 coordinates GTP; it reads DIRG.

This sequence belongs to the RapZ-like family.

In terms of biological role, displays ATPase and GTPase activities. This chain is Nucleotide-binding protein Csac_1160, found in Caldicellulosiruptor saccharolyticus (strain ATCC 43494 / DSM 8903 / Tp8T 6331).